The following is a 795-amino-acid chain: Phenylalanine--tRNA ligase beta subunit (795 aa).

One can recognise a tRNA-binding domain in the interval 39–148; the sequence is AGSFHGVVVG…ADAPIGTDIR (110 aa). The B5 domain occupies 401–476; that stretch reads PKRATITLRR…RVYGYNNIPD (76 aa). Mg(2+) is bound by residues aspartate 454, aspartate 460, glutamate 463, and glutamate 464. The FDX-ACB domain maps to 701 to 794; sequence SRFPANRRDI…LKERFQASLR (94 aa).

The protein belongs to the phenylalanyl-tRNA synthetase beta subunit family. Type 1 subfamily. Tetramer of two alpha and two beta subunits. It depends on Mg(2+) as a cofactor.

It localises to the cytoplasm. The enzyme catalyses tRNA(Phe) + L-phenylalanine + ATP = L-phenylalanyl-tRNA(Phe) + AMP + diphosphate + H(+). This is Phenylalanine--tRNA ligase beta subunit from Shigella flexneri.